The following is a 449-amino-acid chain: Elongation factor 1-alpha 1 (449 aa).

A tr-type G domain is found at 5-230; sequence KFHINIVVIG…DQINEPKRPS (226 aa). A G1 region spans residues 14-21; that stretch reads GHVDSGKS. Residue 14-21 coordinates GTP; sequence GHVDSGKS. Lys-55 carries the N6,N6-dimethyllysine modification. Residues 70-74 are G2; it reads GITID. N6,N6,N6-trimethyllysine is present on Lys-79. Residues 91–94 are G3; sequence DAPG. GTP contacts are provided by residues 91 to 95 and 153 to 156; these read DAPGH and NKMD. Residues 153 to 156 form a G4 region; it reads NKMD. Lys-187 is subject to N6,N6,N6-trimethyllysine. Positions 194–196 are G5; that stretch reads SGF. Lys-261 carries the post-translational modification N6-methyllysine. 2 positions are modified to N6,N6,N6-trimethyllysine: Lys-306 and Lys-396. Glycyl lysine isopeptide (Lys-Gly) (interchain with G-Cter in ubiquitin) cross-links involve residues Lys-438 and Lys-441.

The protein belongs to the TRAFAC class translation factor GTPase superfamily. Classic translation factor GTPase family. EF-Tu/EF-1A subfamily.

Its subcellular location is the cytoplasm. This protein promotes the GTP-dependent binding of aminoacyl-tRNA to the A-site of ribosomes during protein biosynthesis. In Arabidopsis thaliana (Mouse-ear cress), this protein is Elongation factor 1-alpha 1 (A1).